Consider the following 246-residue polypeptide: Chanoclavine-I dehydrogenase easD (246 aa).

A signal peptide spans 1–20; that stretch reads MASVSSKIFAITGGASGIGA. NADP(+)-binding residues include Ile18, Asp66, Arg132, Tyr169, and Lys173. Tyr169 functions as the Proton donor in the catalytic mechanism. Catalysis depends on Lys173, which acts as the Lowers pKa of active site Tyr.

This sequence belongs to the short-chain dehydrogenases/reductases (SDR) family. As to quaternary structure, homotetramer.

It carries out the reaction chanoclavine-I + NAD(+) = chanoclavine-I aldehyde + NADH + H(+). It functions in the pathway alkaloid biosynthesis; ergot alkaloid biosynthesis. Chanoclavine-I dehydrogenase; part of the gene cluster that mediates the biosynthesis of fungal ergot alkaloid. DmaW catalyzes the first step of ergot alkaloid biosynthesis by condensing dimethylallyl diphosphate (DMAP) and tryptophan to form 4-dimethylallyl-L-tryptophan. The second step is catalyzed by the methyltransferase easF that methylates 4-dimethylallyl-L-tryptophan in the presence of S-adenosyl-L-methionine, resulting in the formation of 4-dimethylallyl-L-abrine. The catalase easC and the FAD-dependent oxidoreductase easE then transform 4-dimethylallyl-L-abrine to chanoclavine-I which is further oxidized by easD in the presence of NAD(+), resulting in the formation of chanoclavine-I aldehyde. Chanoclavine-I aldehyde is the precursor of ergoamides and ergopeptines in Clavicipitaceae, and clavine-type alcaloids such as fumiclavine in Trichocomaceae. However, the metabolites downstream of chanoclavine-I aldehyde in Arthrodermataceae have not been identified yet. In Arthroderma benhamiae (strain ATCC MYA-4681 / CBS 112371) (Trichophyton mentagrophytes), this protein is Chanoclavine-I dehydrogenase easD.